A 516-amino-acid polypeptide reads, in one-letter code: MARSVDTEAMTTRDPSSKRGGWKTFPFMIATLLGLSIASFGWVMNLVVFLIKEFNIKSIAATQNSNIVNGCVSMLPVVAAILADSFFGNIPVISVSAFISLLGIILLTMITSLDHLRPPPCETGSILCESPSKLQLGILYIALALVIIGSAGTRFTLASAGANQYEKPKEQGSFFNWYFLTLYTGAITGATAIVYTQENASWKLGFGLCAVANLISFIVFVSGKRYYKHDKPMGSPFTNLIRVVVAATRKRKAVISSREEDYHHGLGREGKTSSAMPSKSFRFFNRAALKTEDDSVNNNWRLCSVQEVEDFKAVFRVLPLLLAIIFVSTPMVTQTSLIILQALVTDRGLGPHFKIPAGSLQVIVIITACIVILMNNCLVYPMYQKLAHKPLTPLQKVGIGHVFIILSMAISAIVEAKRLKTVTNGHSMSVLWLHRDFIASVVIGISFYLSTALITLIQKTTKWLPNDINHGRVDNVYWLLVIVGVLNYFLVCAWFYRYRNLNDDDDQEQDPKDDTT.

Helical transmembrane passes span 31 to 51, 67 to 87, 90 to 110, 138 to 158, 174 to 194, 201 to 221, 320 to 340, 362 to 382, 394 to 414, 437 to 457, and 476 to 496; these read TLLGLSIASFGWVMNLVVFLI, IVNGCVSMLPVVAAILADSFF, IPVISVSAFISLLGIILLTMI, ILYIALALVIIGSAGTRFTLA, FFNWYFLTLYTGAITGATAIV, SWKLGFGLCAVANLISFIVFV, LLLAIIFVSTPMVTQTSLIIL, VIVIITACIVILMNNCLVYPM, LQKVGIGHVFIILSMAISAIV, FIASVVIGISFYLSTALITLI, and VYWLLVIVGVLNYFLVCAWFY.

It belongs to the major facilitator superfamily. Proton-dependent oligopeptide transporter (POT/PTR) (TC 2.A.17) family. Not detected.

It is found in the membrane. Functionally, transporter involved in a passive nitrate efflux. This chain is Putative protein NRT1/ PTR FAMILY 2.2 (NPF2.2), found in Arabidopsis thaliana (Mouse-ear cress).